The chain runs to 289 residues: Shikimate dehydrogenase (NADP(+)) (289 aa).

Shikimate contacts are provided by residues Ser-19–Ser-21 and Thr-66. The active-site Proton acceptor is Lys-70. Residues Asn-91 and Asp-106 each contribute to the shikimate site. NADP(+)-binding positions include Gly-131–Ala-135, Asn-155–Lys-160, and Leu-229. Tyr-231 serves as a coordination point for shikimate. Gly-252 lines the NADP(+) pocket.

Belongs to the shikimate dehydrogenase family. Homodimer.

It catalyses the reaction shikimate + NADP(+) = 3-dehydroshikimate + NADPH + H(+). The protein operates within metabolic intermediate biosynthesis; chorismate biosynthesis; chorismate from D-erythrose 4-phosphate and phosphoenolpyruvate: step 4/7. Functionally, involved in the biosynthesis of the chorismate, which leads to the biosynthesis of aromatic amino acids. Catalyzes the reversible NADPH linked reduction of 3-dehydroshikimate (DHSA) to yield shikimate (SA). The chain is Shikimate dehydrogenase (NADP(+)) from Halothermothrix orenii (strain H 168 / OCM 544 / DSM 9562).